Consider the following 471-residue polypeptide: Heat shock 70 kDa protein 13 (471 aa).

The first 22 residues, 1-22 (MAREMTILGSAVLTLLLAGYLA), serve as a signal peptide directing secretion. Over residues 315–341 (EQDRKEPHSSDTELPKDKLSSADDHRV) the composition is skewed to basic and acidic residues. The tract at residues 315 to 352 (EQDRKEPHSSDTELPKDKLSSADDHRVNSGFGRGLSDK) is disordered.

It belongs to the heat shock protein 70 family. In terms of assembly, binds UBQLN2. Constitutively expressed in all tissues.

Its subcellular location is the microsome. It localises to the endoplasmic reticulum. Functionally, has peptide-independent ATPase activity. The protein is Heat shock 70 kDa protein 13 (HSPA13) of Homo sapiens (Human).